The primary structure comprises 226 residues: Ribonuclease 3 (226 aa).

The region spanning 6–128 (ANKIQQILGY…LIGSIYLDSN (123 aa)) is the RNase III domain. Glutamate 41 provides a ligand contact to Mg(2+). Aspartate 45 is an active-site residue. Residues asparagine 114 and glutamate 117 each contribute to the Mg(2+) site. Residue glutamate 117 is part of the active site. The region spanning 155 to 225 (DPKTRLQEYL…ARKALIKLGV (71 aa)) is the DRBM domain.

The protein belongs to the ribonuclease III family. As to quaternary structure, homodimer. Requires Mg(2+) as cofactor.

Its subcellular location is the cytoplasm. The catalysed reaction is Endonucleolytic cleavage to 5'-phosphomonoester.. Digests double-stranded RNA. Involved in the processing of primary rRNA transcript to yield the immediate precursors to the large and small rRNAs (23S and 16S). Processes some mRNAs, and tRNAs when they are encoded in the rRNA operon. Processes pre-crRNA and tracrRNA of type II CRISPR loci if present in the organism. In Buchnera aphidicola subsp. Schizaphis graminum (strain Sg), this protein is Ribonuclease 3.